The chain runs to 547 residues: ATP synthase subunit alpha (547 aa).

ATP is bound at residue 173 to 180; it reads GDRQTGKT.

The protein belongs to the ATPase alpha/beta chains family. F-type ATPases have 2 components, CF(1) - the catalytic core - and CF(0) - the membrane proton channel. CF(1) has five subunits: alpha(3), beta(3), gamma(1), delta(1), epsilon(1). CF(0) has three main subunits: a(1), b(2) and c(9-12). The alpha and beta chains form an alternating ring which encloses part of the gamma chain. CF(1) is attached to CF(0) by a central stalk formed by the gamma and epsilon chains, while a peripheral stalk is formed by the delta and b chains.

The protein localises to the cell membrane. The enzyme catalyses ATP + H2O + 4 H(+)(in) = ADP + phosphate + 5 H(+)(out). Functionally, produces ATP from ADP in the presence of a proton gradient across the membrane. The alpha chain is a regulatory subunit. The chain is ATP synthase subunit alpha from Thermobifida fusca (strain YX).